We begin with the raw amino-acid sequence, 588 residues long: MIQHPRIGIRPTIDGRRQGVRESLEVQTMNMAKSVADLISSTLKYPDGEPVECVISPSTIGRVPEAAASHELFKKSNVCATITVTPCWCYGSETMDMSPDIPHAIWGFNGTERPGAVYLAAVLASHAQKGIPAFGIYGRDVQEASDTAIPEDVKEKLLRYARAALATGLMRDTAYLSMGSVSMGIGGSIVNPDFFQEYLGMRNESVDMTEFTRRMDRGIYDPEEFERALKWVKENVKEGFDHNREDLVLSREEKDRQWEFVIKMFMIGRDLMVGNPRLAELGFEEEAVGHHALVAGFQGQRQWTDHFPNGDFMETFLNTQFDWNGIRKPFVFATENDSLNGVSMLFNYLLTNTPQIFADVRTYWSPEAVKRVTGHTLEGCAAAGFLHLINSGSCTLDGTGQATRDGKPVMKPFWELEESEVQAMLENTDFPPANREYFRGGGFSTRFLTKGDMPVTMVRLNLLKGVGPVLQIAEGYTLELPEDVHHTLDNRTDPGWPTTWFAPRLTGKGAFKSVYDVMNNWGANHGAITYGHIGADLITLASMLRIPVNMHNVPEEDIFRPKNWSLFGTEDLESADYRACQLLGPLHK.

Catalysis depends on proton acceptor residues glutamate 335 and aspartate 359. Positions 335, 359, and 525 each coordinate Mn(2+).

The protein belongs to the L-fucose isomerase family. Requires Mn(2+) as cofactor.

The protein localises to the cytoplasm. The catalysed reaction is L-fucose = L-fuculose. It functions in the pathway carbohydrate degradation; L-fucose degradation; L-lactaldehyde and glycerone phosphate from L-fucose: step 1/3. Functionally, converts the aldose L-fucose into the corresponding ketose L-fuculose. This chain is L-fucose isomerase, found in Streptococcus pneumoniae (strain Hungary19A-6).